We begin with the raw amino-acid sequence, 1434 residues long: Protein patched homolog 1 (1434 aa).

The segment covering 1-13 (MASAGNAAGALGR) has biased composition (low complexity). The disordered stretch occupies residues 1–34 (MASAGNAAGALGRQAGGGRRRRTGGPHRAAPDRD). Residues 1–86 (MASAGNAAGA…GCYIQKNCGK (86 aa)) lie on the Cytoplasmic side of the membrane. Residues 87–107 (FLVVGLLIFGAFAVGLKAANL) form a helical membrane-spanning segment. Over 108–422 (ETNVEELWVE…LDDILKSFSD (315 aa)) the chain is Extracellular. N-linked (GlcNAc...) asparagine glycosylation is found at asparagine 127, asparagine 298, asparagine 335, and asparagine 400. Residues 423–443 (VSVIRVASGYLLMLAYACLTM) form a helical membrane-spanning segment. In terms of domain architecture, SSD spans 424 to 584 (SVIRVASGYL…LLIFPAILSM (161 aa)). The Cytoplasmic segment spans residues 444-458 (LRWDCSKSQGAVGLA). A helical transmembrane segment spans residues 459–479 (GVLLVALSVAAGLGLCSLIGI). Residues 480 to 487 (SFNAATTQ) are Extracellular-facing. Residues 488-508 (VLPFLALGVGVDDVFLLAHAF) traverse the membrane as a helical segment. Over 509–533 (SETGQNKRIPFEDRTGECLKRTGAS) the chain is Cytoplasmic. Residues 534–554 (VALTSISNVTAFFMAALIPIP) form a helical membrane-spanning segment. Residues 555 to 563 (ALRAFSLQA) are Extracellular-facing. A helical transmembrane segment spans residues 564 to 584 (AVVVVFNFAMVLLIFPAILSM). At 585 to 734 (DLYRREDRRL…HYAPFLLKPK (150 aa)) the chain is on the cytoplasmic side. The helical transmembrane segment at 735–755 (AKVVVILLFLGLLGVSLYGTT) threads the bilayer. The Extracellular segment spans residues 756 to 1013 (RVRDGLDLTD…WEQYISLRHW (258 aa)). 2 N-linked (GlcNAc...) asparagine glycosylation sites follow: asparagine 861 and asparagine 986. The helical transmembrane segment at 1014-1034 (LLLSISVVLACTFLVCAVFLL) threads the bilayer. The Cytoplasmic portion of the chain corresponds to 1035 to 1039 (NPWTA). A helical membrane pass occupies residues 1040–1060 (GIIVMVLALMTVELFGMMGLI). The Extracellular portion of the chain corresponds to 1061-1069 (GIKLSAVPV). Residues 1070-1090 (VILIASVGIGVEFTVHVALAF) form a helical membrane-spanning segment. Topologically, residues 1091-1107 (LTAIGDKNHRAMLALEH) are cytoplasmic. The helical transmembrane segment at 1108–1128 (MFAPVLDGAVSTLLGVLMLAG) threads the bilayer. Residues 1129 to 1140 (SEFDFIVRYFFA) lie on the Extracellular side of the membrane. The helical transmembrane segment at 1141–1161 (VLAILTVLGVLNGLVLLPVLL) threads the bilayer. At 1162-1434 (SFFGPCPEVS…EERPWGSSSN (273 aa)) the chain is on the cytoplasmic side. Disordered stretches follow at residues 1175-1219 (GLNR…TVSG), 1257-1348 (HPDS…SSVP), and 1368-1396 (HPPP…HGVF). Residue threonine 1181 is modified to Phosphothreonine. Phosphoserine is present on serine 1183. Over residues 1204 to 1213 (SDSSDSEYSS) the composition is skewed to low complexity. The span at 1288 to 1297 (PRRDPPREGL) shows a compositional bias: basic and acidic residues. Positions 1335–1348 (PRNPTSTAMGSSVP) are enriched in polar residues. Residue lysine 1413 forms a Glycyl lysine isopeptide (Lys-Gly) (interchain with G-Cter in ubiquitin) linkage.

It belongs to the patched family. Interacts with SNX17. Interacts with IHH. Interacts with G-protein coupled receptor GPR37L1. In terms of processing, glycosylation is necessary for SHH binding. In the absence of Hh ligands, ubiquitination by ITCH at Lys-1413 promotes endocytosis and both proteasomal and lysosomal degradation. Detected in cerebellar Bergmann glia cells (at protein level). In the developing embryo, first detected within the ventral neural tube and later in the somites and limb buds. Expression in the limb buds is restricted to the posterior ectoderm surrounding the zone of polarizing activity. In the adult, expression is seen in brain, lung, liver, kidney and ocular tissues; lower levels in heart, skeletal muscle, and testis.

The protein localises to the cell membrane. Acts as a receptor for sonic hedgehog (SHH), indian hedgehog (IHH) and desert hedgehog (DHH). Associates with the smoothened protein (SMO) to transduce the hedgehog's proteins signal. Seems to have a tumor suppressor function, as inactivation of this protein is probably a necessary, if not sufficient step for tumorigenesis. In Mus musculus (Mouse), this protein is Protein patched homolog 1 (Ptch1).